We begin with the raw amino-acid sequence, 298 residues long: 4-hydroxy-tetrahydrodipicolinate synthase (298 aa).

Residue T48 participates in pyruvate binding. Catalysis depends on Y137, which acts as the Proton donor/acceptor. The active-site Schiff-base intermediate with substrate is K166. I207 provides a ligand contact to pyruvate.

The protein belongs to the DapA family. In terms of assembly, homotetramer; dimer of dimers.

The protein localises to the cytoplasm. The enzyme catalyses L-aspartate 4-semialdehyde + pyruvate = (2S,4S)-4-hydroxy-2,3,4,5-tetrahydrodipicolinate + H2O + H(+). Its pathway is amino-acid biosynthesis; L-lysine biosynthesis via DAP pathway; (S)-tetrahydrodipicolinate from L-aspartate: step 3/4. In terms of biological role, catalyzes the condensation of (S)-aspartate-beta-semialdehyde [(S)-ASA] and pyruvate to 4-hydroxy-tetrahydrodipicolinate (HTPA). This is 4-hydroxy-tetrahydrodipicolinate synthase from Campylobacter hominis (strain ATCC BAA-381 / DSM 21671 / CCUG 45161 / LMG 19568 / NCTC 13146 / CH001A).